A 308-amino-acid polypeptide reads, in one-letter code: N-acetylmuramic acid 6-phosphate etherase (308 aa).

Residues 62-225 (TAARLRQGGR…STGVMVQLGK (164 aa)) form the SIS domain. Glutamate 90 acts as the Proton donor in catalysis. The active site involves glutamate 121.

This sequence belongs to the GCKR-like family. MurNAc-6-P etherase subfamily. Homodimer.

The enzyme catalyses N-acetyl-D-muramate 6-phosphate + H2O = N-acetyl-D-glucosamine 6-phosphate + (R)-lactate. The protein operates within amino-sugar metabolism; N-acetylmuramate degradation. In terms of biological role, specifically catalyzes the cleavage of the D-lactyl ether substituent of MurNAc 6-phosphate, producing GlcNAc 6-phosphate and D-lactate. In Thermosynechococcus vestitus (strain NIES-2133 / IAM M-273 / BP-1), this protein is N-acetylmuramic acid 6-phosphate etherase.